The sequence spans 239 residues: Cytochrome c oxidase subunit 2 (239 aa).

Over 1-26 (MATPAQLGLMDAASPVMEEMIYFHDH) the chain is Mitochondrial intermembrane. Residues 27–48 (VMLVLILITCLIFYSMLVLISS) form a helical membrane-spanning segment. Residues 49-62 (KYIYRFLTDGHVIE) are Mitochondrial matrix-facing. The chain crosses the membrane as a helical span at residues 63–82 (TVWTVIPAIILVVVALPSLK). Over 83 to 239 (LLYLTDELDN…ESLGSLNMKR (157 aa)) the chain is Mitochondrial intermembrane. Cu cation contacts are provided by His161, Cys196, Glu198, Cys200, His204, and Met207. Glu198 contributes to the Mg(2+) binding site.

It belongs to the cytochrome c oxidase subunit 2 family. As to quaternary structure, component of the cytochrome c oxidase (complex IV, CIV), a multisubunit enzyme composed of a catalytic core of 3 subunits and several supernumerary subunits. The complex exists as a monomer or a dimer and forms supercomplexes (SCs) in the inner mitochondrial membrane with ubiquinol-cytochrome c oxidoreductase (cytochrome b-c1 complex, complex III, CIII). Requires Cu cation as cofactor.

The protein resides in the mitochondrion inner membrane. The enzyme catalyses 4 Fe(II)-[cytochrome c] + O2 + 8 H(+)(in) = 4 Fe(III)-[cytochrome c] + 2 H2O + 4 H(+)(out). Component of the cytochrome c oxidase, the last enzyme in the mitochondrial electron transport chain which drives oxidative phosphorylation. The respiratory chain contains 3 multisubunit complexes succinate dehydrogenase (complex II, CII), ubiquinol-cytochrome c oxidoreductase (cytochrome b-c1 complex, complex III, CIII) and cytochrome c oxidase (complex IV, CIV), that cooperate to transfer electrons derived from NADH and succinate to molecular oxygen, creating an electrochemical gradient over the inner membrane that drives transmembrane transport and the ATP synthase. Cytochrome c oxidase is the component of the respiratory chain that catalyzes the reduction of oxygen to water. Electrons originating from reduced cytochrome c in the intermembrane space (IMS) are transferred via the dinuclear copper A center (CU(A)) of subunit 2 and heme A of subunit 1 to the active site in subunit 1, a binuclear center (BNC) formed by heme A3 and copper B (CU(B)). The BNC reduces molecular oxygen to 2 water molecules using 4 electrons from cytochrome c in the IMS and 4 protons from the mitochondrial matrix. This Branchiostoma lanceolatum (Common lancelet) protein is Cytochrome c oxidase subunit 2 (COII).